We begin with the raw amino-acid sequence, 289 residues long: Probable acetolactate synthase small subunit (289 aa).

S34 carries the phosphoserine modification. In terms of domain architecture, ACT spans 72–149 (VFNCLVQNEP…AVLDYTGTSM (78 aa)).

The protein belongs to the acetolactate synthase small subunit family.

Its subcellular location is the cytoplasm. It functions in the pathway amino-acid biosynthesis; L-isoleucine biosynthesis; L-isoleucine from 2-oxobutanoate: step 1/4. Its pathway is amino-acid biosynthesis; L-valine biosynthesis; L-valine from pyruvate: step 1/4. In terms of biological role, stimulates activity of the acetolactate synthase catalytic subunit ilv1. This is Probable acetolactate synthase small subunit from Schizosaccharomyces pombe (strain 972 / ATCC 24843) (Fission yeast).